Here is a 586-residue protein sequence, read N- to C-terminus: Protein HOL1 (586 aa).

At 1 to 66 (MDKYTNRDHP…NWSSWRKLAH (66 aa)) the chain is on the extracellular side. A helical transmembrane segment spans residues 67 to 87 (FGLMAFITAFTAATSNDAGAA). Residues 88–103 (QDSLNEIYGISYDSMN) lie on the Cytoplasmic side of the membrane. The chain crosses the membrane as a helical span at residues 104–124 (TGAGVLFLGIGWSTLFLAPFA). Over 125 to 130 (NLYGRK) the chain is Extracellular. The helical transmembrane segment at 131–151 (ITYIVCTTLGLFGALWFALAK) threads the bilayer. Topologically, residues 152-189 (RTSDTIWSQLFVGISESCAEAQVQLSLSDIFFQHQLGS) are cytoplasmic. The chain crosses the membrane as a helical span at residues 190–210 (VLTVYIMCTSIGTFLGPLIAG). Topologically, residues 211–219 (YISAFTNFR) are extracellular. Residues 220 to 240 (WVGWVAVIISGGLLITIIFGC) traverse the membrane as a helical segment. At 241-362 (EETYFDRGQY…YFKYLKINLR (122 aa)) the chain is on the cytoplasmic side. A helical membrane pass occupies residues 363 to 383 (MFLFPPVWLSGMFWGIQDVFL). Residues 384–413 (TFYLTTQESAYYEPPWNYSDFGVAIMNVPT) are Extracellular-facing. Residues 414 to 434 (LIGAVIGCICAGIVSDYFVLW) form a helical membrane-spanning segment. Over 435–448 (MARHNRGILEAEFR) the chain is Cytoplasmic. A helical membrane pass occupies residues 449–469 (LYFSIATAIIGPAGLLMFGIG). At 470–477 (TARQWPWQ) the chain is on the extracellular side. Residues 478 to 498 (AIYVGLGFVGFAWGCSGDIAM) traverse the membrane as a helical segment. At 499-508 (AYLMDCYPDM) the chain is on the cytoplasmic side. The chain crosses the membrane as a helical span at residues 509–529 (VLEGMVCTAIINNTISCIFTF). The Extracellular portion of the chain corresponds to 530–544 (TCSDWLAASGTENTY). Residues 545–565 (IALAVINFGITAFALPMYYYG) form a helical membrane-spanning segment. At 566–586 (KRIRLWTKRWYLQSVNLRDGV) the chain is on the cytoplasmic side.

The protein resides in the membrane. Functionally, seems to be involved in the uptake of several cations and of histidinol. This chain is Protein HOL1 (HOL1), found in Saccharomyces cerevisiae (strain ATCC 204508 / S288c) (Baker's yeast).